The chain runs to 425 residues: Perilipin-2 (425 aa).

Ala2 carries the post-translational modification N-acetylalanine. Ser213 bears the Phosphoserine mark. Residue Tyr230 is modified to Phosphotyrosine.

The protein belongs to the perilipin family. As to quaternary structure, interacts with IRGC. In terms of processing, acylated; primarily with C14, C16 and C18 fatty acids. Phosphorylation at Tyr-230 by isoform 1 of CHKA (CHKalpha2) promotes dissociation from lipid droplets: dissociation is followed by recruitment of autophagosome machinery to lipid droplets and subsequent lipid droplet lipolysis. Post-translationally, polyubiquitination of Nt-acetylatable A-PLIN2 by MARCHF6 lead to degradation by 26S proteasomes. As to expression, adipose tissue specific. Expressed abundantly and preferentially in fat pads.

It localises to the membrane. The protein resides in the lipid droplet. Its function is as follows. Structural component of lipid droplets, which is required for the formation and maintenance of lipid storage droplets. The chain is Perilipin-2 from Mus musculus (Mouse).